The sequence spans 95 residues: Co-chaperonin GroES (95 aa).

It belongs to the GroES chaperonin family. As to quaternary structure, heptamer of 7 subunits arranged in a ring. Interacts with the chaperonin GroEL.

The protein resides in the cytoplasm. Together with the chaperonin GroEL, plays an essential role in assisting protein folding. The GroEL-GroES system forms a nano-cage that allows encapsulation of the non-native substrate proteins and provides a physical environment optimized to promote and accelerate protein folding. GroES binds to the apical surface of the GroEL ring, thereby capping the opening of the GroEL channel. In Nitratidesulfovibrio vulgaris (strain DSM 19637 / Miyazaki F) (Desulfovibrio vulgaris), this protein is Co-chaperonin GroES.